A 424-amino-acid chain; its full sequence is Caspase-2 (424 aa).

Residues 1-140 (MLGACGMQRY…IVEHSLDSGD (140 aa)) constitute a propeptide that is removed on maturation. The CARD domain maps to 7-96 (MQRYHQEALK…QHLAEMILKT (90 aa)). Catalysis depends on residues histidine 248 and cysteine 291. A compositionally biased stretch (basic and acidic residues) spans 296 to 310 (TDRGVDQRDGKERSD). Residues 296–325 (TDRGVDQRDGKERSDSPGCEESDANKEENL) form a disordered region.

It belongs to the peptidase C14A family. Heterotetramer that consists of two anti-parallel arranged heterodimers, each one formed by a p18 subunit and a p12 subunit.

It carries out the reaction Strict requirement for an Asp residue at P1, with 316-Asp being essential for proteolytic activity and has a preferred cleavage sequence of Val-Asp-Val-Ala-Asp-|-.. In terms of biological role, involved in the activation cascade of caspases responsible for apoptosis execution. Might function by either activating some proteins required for cell death or inactivating proteins necessary for cell survival. This chain is Caspase-2 (CASP2), found in Gallus gallus (Chicken).